Here is a 975-residue protein sequence, read N- to C-terminus: Ubiquitin C-terminal hydrolase 15 (975 aa).

Cysteine 88, cysteine 91, cysteine 99, cysteine 102, cysteine 108, cysteine 112, histidine 121, and cysteine 125 together coordinate Zn(2+). The segment at 88–125 (CATCHGPAKTRCSRCKSVRYCSGKCQIIHWRQGHKQTC) adopts an MYND-type zinc-finger fold. Residues 301 to 378 (EGPYASAAES…STKTAVSTNS (78 aa)) form a disordered region. The span at 309–322 (ESLQRSNSSGNVTG) shows a compositional bias: polar residues. Residues 354–369 (YDGHEKNPHNKNEQRS) are compositionally biased toward basic and acidic residues. The 307-residue stretch at 441-747 (RGLFNCGNSC…GAYMLFYMRS (307 aa)) folds into the USP domain. Cysteine 450 functions as the Nucleophile in the catalytic mechanism. Residue histidine 706 is the Proton acceptor of the active site. The interval 764–783 (PTCSKRHSSKSSKGSKQDLN) is disordered.

The protein belongs to the peptidase C19 family. As to expression, highly expressed in young panicles. Expressed in roots, leaf blades, leaf sheaths and stems. Expressed at low levels in brown grains.

The protein resides in the cytoplasm. Its subcellular location is the nucleus. The catalysed reaction is Thiol-dependent hydrolysis of ester, thioester, amide, peptide and isopeptide bonds formed by the C-terminal Gly of ubiquitin (a 76-residue protein attached to proteins as an intracellular targeting signal).. Recognizes and hydrolyzes the peptide bond at the C-terminal Gly of ubiquitin. Involved in the processing of poly-ubiquitin precursors as well as that of ubiquitinated proteins. Involved in the regulation of grain size. Acts as positive regulator of grain width and size by influencing cell proliferation. Functions partially antagonistically with GW2 in the regulation of grain width. Possesses deubiquitinating enzyme activity in vitro. The chain is Ubiquitin C-terminal hydrolase 15 from Oryza sativa subsp. japonica (Rice).